The following is a 313-amino-acid chain: N-acetyl-gamma-glutamyl-phosphate reductase 2 (313 aa).

Cys117 is an active-site residue.

This sequence belongs to the NAGSA dehydrogenase family. Type 2 subfamily.

The protein resides in the cytoplasm. The enzyme catalyses N-acetyl-L-glutamate 5-semialdehyde + phosphate + NADP(+) = N-acetyl-L-glutamyl 5-phosphate + NADPH + H(+). The protein operates within amino-acid biosynthesis; L-arginine biosynthesis; N(2)-acetyl-L-ornithine from L-glutamate: step 3/4. Functionally, catalyzes the NADPH-dependent reduction of N-acetyl-5-glutamyl phosphate to yield N-acetyl-L-glutamate 5-semialdehyde. In Pseudomonas putida (strain ATCC 47054 / DSM 6125 / CFBP 8728 / NCIMB 11950 / KT2440), this protein is N-acetyl-gamma-glutamyl-phosphate reductase 2.